Reading from the N-terminus, the 626-residue chain is DNA-directed RNA polymerase subunit beta C-terminal section (626 aa).

The segment at 287-307 (NTKSKNTGKGSKPPRASKAQN) is disordered.

This sequence belongs to the RNA polymerase beta chain family. As to quaternary structure, in plastids the minimal PEP RNA polymerase catalytic core is composed of four subunits: alpha, beta, beta', and beta''. When a (nuclear-encoded) sigma factor is associated with the core the holoenzyme is formed, which can initiate transcription.

Its subcellular location is the plastid. The protein localises to the chloroplast. The catalysed reaction is RNA(n) + a ribonucleoside 5'-triphosphate = RNA(n+1) + diphosphate. Its function is as follows. DNA-dependent RNA polymerase catalyzes the transcription of DNA into RNA using the four ribonucleoside triphosphates as substrates. The polypeptide is DNA-directed RNA polymerase subunit beta C-terminal section (rpoB2) (Chlamydomonas reinhardtii (Chlamydomonas smithii)).